The sequence spans 104 residues: Small ribosomal subunit protein uS10 (104 aa).

It belongs to the universal ribosomal protein uS10 family. In terms of assembly, part of the 30S ribosomal subunit.

Functionally, involved in the binding of tRNA to the ribosomes. This chain is Small ribosomal subunit protein uS10, found in Ralstonia nicotianae (strain ATCC BAA-1114 / GMI1000) (Ralstonia solanacearum).